The chain runs to 444 residues: Gentisate transporter (444 aa).

Helical transmembrane passes span 42–64 (AAVL…YGTV), 79–101 (LGTI…GRLS), 108–127 (AAVI…CAFA), 131–153 (WVFG…SVNA), 166–188 (AWAT…LALV), 198–220 (WRFM…MKVI), 252–274 (WISI…LGTW), 289–311 (ALMF…AWAG), 318–340 (RSGV…YPPV), 344–366 (YVIL…AAVA), 378–400 (LGWA…GLLL), and 410–428 (FIMF…SVLL).

It belongs to the major facilitator superfamily. Aromatic acid:H(+) symporter (AAHS) (TC 2.A.1.15) family.

It localises to the cell membrane. Transport of gentisate (2,5-dihydroxybenzoate) into the cell. Does not transport 3-hydroxybenzoate or benzoate. The protein is Gentisate transporter (genK) of Corynebacterium glutamicum (strain ATCC 13032 / DSM 20300 / JCM 1318 / BCRC 11384 / CCUG 27702 / LMG 3730 / NBRC 12168 / NCIMB 10025 / NRRL B-2784 / 534).